Consider the following 49-residue polypeptide: MRVNVTLACTECGDRNYITTKNKRNNPERIEMKKYCPRLNKYTLHRETK.

The protein belongs to the bacterial ribosomal protein bL33 family.

This chain is Large ribosomal subunit protein bL33A, found in Staphylococcus aureus (strain Mu3 / ATCC 700698).